A 689-amino-acid polypeptide reads, in one-letter code: Glycine--tRNA ligase beta subunit (689 aa).

The protein belongs to the class-II aminoacyl-tRNA synthetase family. Tetramer of two alpha and two beta subunits.

It localises to the cytoplasm. The enzyme catalyses tRNA(Gly) + glycine + ATP = glycyl-tRNA(Gly) + AMP + diphosphate. The protein is Glycine--tRNA ligase beta subunit of Klebsiella pneumoniae (strain 342).